The chain runs to 337 residues: tRNA N6-adenosine threonylcarbamoyltransferase (337 aa).

2 residues coordinate Fe cation: His111 and His115. Substrate is bound by residues 134–138 (LVSGG), Asp167, Gly180, and Asn272. Asp300 is a binding site for Fe cation.

It belongs to the KAE1 / TsaD family. Requires Fe(2+) as cofactor.

Its subcellular location is the cytoplasm. The enzyme catalyses L-threonylcarbamoyladenylate + adenosine(37) in tRNA = N(6)-L-threonylcarbamoyladenosine(37) in tRNA + AMP + H(+). Required for the formation of a threonylcarbamoyl group on adenosine at position 37 (t(6)A37) in tRNAs that read codons beginning with adenine. Is involved in the transfer of the threonylcarbamoyl moiety of threonylcarbamoyl-AMP (TC-AMP) to the N6 group of A37, together with TsaE and TsaB. TsaD likely plays a direct catalytic role in this reaction. In Salmonella typhi, this protein is tRNA N6-adenosine threonylcarbamoyltransferase.